Reading from the N-terminus, the 703-residue chain is Protein FAR1-RELATED SEQUENCE 6 (703 aa).

A disordered region spans residues 1 to 29; that stretch reads MERSESVDEDVQASAYLENDEVRERDDPM. An FAR1 domain is found at 99–184; sequence NYYNCYASEV…TLDHNHLLGC (86 aa). The 96-residue stretch at 297–392 folds into the MULE domain; that stretch reads VIFIDSSYIS…SLTHIMRKIP (96 aa). The SWIM-type zinc-finger motif lies at 584-620; that stretch reads FEVLYNRSVGEVRCICSCFNFYGYLCRHALCVLNFNG.

This sequence belongs to the FHY3/FAR1 family. As to expression, expressed in hypocotyls, rosette and cauline leaves, inflorescences stems, flowers and siliques.

Its subcellular location is the nucleus. Its function is as follows. Putative transcription activator involved in regulating light control of development. May have a role in controlling flowering time. The protein is Protein FAR1-RELATED SEQUENCE 6 (FRS6) of Arabidopsis thaliana (Mouse-ear cress).